The primary structure comprises 207 residues: ATP-dependent Clp protease proteolytic subunit (207 aa).

The propeptide occupies 1 to 14 (MSYSGERDNLAPHM). The active-site Nucleophile is the S111. H136 is a catalytic residue.

It belongs to the peptidase S14 family. Fourteen ClpP subunits assemble into 2 heptameric rings which stack back to back to give a disk-like structure with a central cavity, resembling the structure of eukaryotic proteasomes. Component of the ClpAP and ClpXP complexes.

The protein localises to the cytoplasm. It catalyses the reaction Hydrolysis of proteins to small peptides in the presence of ATP and magnesium. alpha-casein is the usual test substrate. In the absence of ATP, only oligopeptides shorter than five residues are hydrolyzed (such as succinyl-Leu-Tyr-|-NHMec, and Leu-Tyr-Leu-|-Tyr-Trp, in which cleavage of the -Tyr-|-Leu- and -Tyr-|-Trp bonds also occurs).. Functionally, cleaves peptides in various proteins in a process that requires ATP hydrolysis. Has a chymotrypsin-like activity. Plays a major role in the degradation of misfolded proteins. The polypeptide is ATP-dependent Clp protease proteolytic subunit (Salmonella paratyphi A (strain ATCC 9150 / SARB42)).